Consider the following 302-residue polypeptide: Urease accessory protein UreD 2 (302 aa).

Belongs to the UreD family. As to quaternary structure, ureD, UreF and UreG form a complex that acts as a GTP-hydrolysis-dependent molecular chaperone, activating the urease apoprotein by helping to assemble the nickel containing metallocenter of UreC. The UreE protein probably delivers the nickel.

It is found in the cytoplasm. Required for maturation of urease via the functional incorporation of the urease nickel metallocenter. The sequence is that of Urease accessory protein UreD 2 from Brucella melitensis biotype 1 (strain ATCC 23456 / CCUG 17765 / NCTC 10094 / 16M).